The following is a 725-amino-acid chain: Methionine--tRNA ligase (725 aa).

The 'HIGH' region signature appears at 27–37; it reads PYANGQIHIGH. The Zn(2+) site is built by C158, C161, C171, and C174. Residues 348-352 carry the 'KMSKS' region motif; sequence KMSKS. ATP is bound at residue K351. The tRNA-binding domain occupies 619 to 725; it reads DFAKIDLRIA…SGAKPGMRVK (107 aa).

Belongs to the class-I aminoacyl-tRNA synthetase family. MetG type 1 subfamily. Homodimer. It depends on Zn(2+) as a cofactor.

Its subcellular location is the cytoplasm. It catalyses the reaction tRNA(Met) + L-methionine + ATP = L-methionyl-tRNA(Met) + AMP + diphosphate. In terms of biological role, is required not only for elongation of protein synthesis but also for the initiation of all mRNA translation through initiator tRNA(fMet) aminoacylation. This is Methionine--tRNA ligase from Burkholderia pseudomallei (strain 668).